A 115-amino-acid chain; its full sequence is U3-lycotoxin-Ls1a (115 aa).

A signal peptide spans 1 to 20 (MKFVLLFGVFLVTLFSYSSA). Positions 21–44 (EMLDDFDQADEDELLSLIEKEEAR) are excised as a propeptide. Disulfide bonds link Cys48-Cys63, Cys55-Cys72, Cys62-Cys87, and Cys74-Cys85.

Belongs to the neurotoxin 19 (CSTX) family. 01 subfamily. Expressed by the venom gland.

It localises to the secreted. The polypeptide is U3-lycotoxin-Ls1a (Lycosa singoriensis (Wolf spider)).